Reading from the N-terminus, the 119-residue chain is Protein TusC (119 aa).

Belongs to the DsrF/TusC family. As to quaternary structure, heterohexamer, formed by a dimer of trimers. The hexameric TusBCD complex contains 2 copies each of TusB, TusC and TusD. The TusBCD complex interacts with TusE.

It localises to the cytoplasm. In terms of biological role, part of a sulfur-relay system required for 2-thiolation of 5-methylaminomethyl-2-thiouridine (mnm(5)s(2)U) at tRNA wobble positions. This Escherichia coli O8 (strain IAI1) protein is Protein TusC.